The chain runs to 86 residues: Large ribosomal subunit protein bL27 (86 aa).

Over residues 1–10 (MAQKKGGGST) the composition is skewed to gly residues. Positions 1-21 (MAQKKGGGSTRNGRDSESKRL) are disordered.

The protein belongs to the bacterial ribosomal protein bL27 family.

This Ralstonia pickettii (strain 12J) protein is Large ribosomal subunit protein bL27.